Consider the following 442-residue polypeptide: MKEQKKVFIKTLGCQMNEYDSQKMHEVLDEHFHTVKTDDYKEADIILINTCSIREKAQEKVFHELGRWKNLKKKKEDLVIGVGGCVASQEGENIIKRAPFVDLVFGPQTIHRLPEMIKRKQSTQESQVDISFPEVEKFDFLPEPKAEGAKAYVSIMEGCDKYCSYCVVPYTRGPEVNRPFEDVLGECAALAEQGVKEITLLGQNVNHYLGPMENGETADLALLIHFIAEIDGIERIRFTTSHPVEFSQNLIDAYGSVPELANHLHLPVQHGSDRVLINMKRNHTILEFKQKIRKLRAIRPDITISSDFIVGFPGETEEDFQKLMDLVKDVNFDQSFSFIYSKRPGTPAADLPDDTPMEVKKDRLKRLQDLLNSNAQIISRQMVGTEQRILVEGTSKKDDNVLAGRTENNRIVNFIGDKSLIGQFAMVKITESLPNSLRGELI.

The 118-residue stretch at 5 to 122 folds into the MTTase N-terminal domain; sequence KKVFIKTLGC…LPEMIKRKQS (118 aa). Residues C14, C51, C85, C159, C163, and C166 each contribute to the [4Fe-4S] cluster site. Positions 145–378 constitute a Radical SAM core domain; it reads KAEGAKAYVS…DLLNSNAQII (234 aa). Residues 380-442 enclose the TRAM domain; the sequence is RQMVGTEQRI…LPNSLRGELI (63 aa).

Belongs to the methylthiotransferase family. MiaB subfamily. Monomer. The cofactor is [4Fe-4S] cluster.

Its subcellular location is the cytoplasm. It catalyses the reaction N(6)-dimethylallyladenosine(37) in tRNA + (sulfur carrier)-SH + AH2 + 2 S-adenosyl-L-methionine = 2-methylsulfanyl-N(6)-dimethylallyladenosine(37) in tRNA + (sulfur carrier)-H + 5'-deoxyadenosine + L-methionine + A + S-adenosyl-L-homocysteine + 2 H(+). Its function is as follows. Catalyzes the methylthiolation of N6-(dimethylallyl)adenosine (i(6)A), leading to the formation of 2-methylthio-N6-(dimethylallyl)adenosine (ms(2)i(6)A) at position 37 in tRNAs that read codons beginning with uridine. The protein is tRNA-2-methylthio-N(6)-dimethylallyladenosine synthase of Francisella philomiragia subsp. philomiragia (strain ATCC 25017 / CCUG 19701 / FSC 153 / O#319-036).